A 935-amino-acid chain; its full sequence is DNA repair protein rev1 (935 aa).

The BRCT domain occupies 59 to 147 (SKSDLFHGLA…KILPWINYRT (89 aa)). Polar residues predominate over residues 162 to 178 (SKPSQPEGNLEDIQTSS). Residues 162–193 (SKPSQPEGNLEDIQTSSQEEEHDNEKDKTKES) are disordered. Residues 184 to 193 (DNEKDKTKES) show a composition bias toward basic and acidic residues. The segment at 235-245 (FFSSSRLHHLS) is interaction with target DNA. DCTP contacts are provided by residues Arg240 and 283-287 (DFDCF). One can recognise a UmuC domain in the interval 279–460 (LLHVDFDCFF…LSVQDLPGVG (182 aa)). Mg(2+) is bound by residues Asp283 and Phe284. Positions 310–312 (IKN) are interaction with target DNA. DCTP-binding positions include 317 to 323 (SCNYEAR), Asn329, and Asp378. Positions 378 and 379 each coordinate Mg(2+). 2 interaction with target DNA regions span residues 460-463 (GSSQ) and 517-525 (RRSISVDVN).

Belongs to the DNA polymerase type-Y family. Mg(2+) is required as a cofactor.

Its subcellular location is the nucleus. It localises to the nucleolus. The protein localises to the mitochondrion. The protein resides in the cytoplasm. It is found in the cytoskeleton. Its subcellular location is the spindle. Functionally, deoxycytidyl transferase involved in DNA repair. Transfers a dCMP residue from dCTP to the 3'-end of a DNA primer in a template-dependent reaction. May assist in the first step in the bypass of abasic lesions by the insertion of a nucleotide opposite the lesion. Required for normal induction of mutations by physical and chemical agents. Involved in mitochondrial DNA mutagenesis. The chain is DNA repair protein rev1 from Schizosaccharomyces pombe (strain 972 / ATCC 24843) (Fission yeast).